We begin with the raw amino-acid sequence, 470 residues long: Ribulose bisphosphate carboxylase large chain (470 aa).

K5 is subject to N6,N6,N6-trimethyllysine. Residues N114 and T164 each contribute to the substrate site. K166 functions as the Proton acceptor in the catalytic mechanism. Residue K168 participates in substrate binding. Residues K192, D194, and E195 each contribute to the Mg(2+) site. Residue K192 is modified to N6-carboxylysine. Catalysis depends on H285, which acts as the Proton acceptor. Positions 286, 318, and 370 each coordinate substrate.

This sequence belongs to the RuBisCO large chain family. Type I subfamily. As to quaternary structure, heterohexadecamer of 8 large chains and 8 small chains; disulfide-linked. The disulfide link is formed within the large subunit homodimers. Mg(2+) serves as cofactor. Post-translationally, the disulfide bond which can form in the large chain dimeric partners within the hexadecamer appears to be associated with oxidative stress and protein turnover.

The protein localises to the plastid. The protein resides in the chloroplast. The catalysed reaction is 2 (2R)-3-phosphoglycerate + 2 H(+) = D-ribulose 1,5-bisphosphate + CO2 + H2O. It catalyses the reaction D-ribulose 1,5-bisphosphate + O2 = 2-phosphoglycolate + (2R)-3-phosphoglycerate + 2 H(+). Its function is as follows. RuBisCO catalyzes two reactions: the carboxylation of D-ribulose 1,5-bisphosphate, the primary event in carbon dioxide fixation, as well as the oxidative fragmentation of the pentose substrate in the photorespiration process. Both reactions occur simultaneously and in competition at the same active site. The polypeptide is Ribulose bisphosphate carboxylase large chain (Kigelia africana (Sausage tree)).